The primary structure comprises 259 residues: MQLQLICEDPSQQSHLDELAARWQLSHTDESDFALVLTAERLELRKVDEPKLGAIFVDLIGGAVGHRRKFGGGKGQAIAKAAGLNKGATPTVLDGTAGLGRDAFVLASLGCKVQMVERHPVVAALLDDGLARAKQDPEIGTWVSERMSLIHASSHDALDQLAQDREFVKPDVVYLDPMYPHPENKKKSALVKKEMRVFQSLVGADLDADGLLEPALALATKRVVVKRPDYANWLNEQKPSMAIETKKNRFDVYVKASMA.

S-adenosyl-L-methionine is bound by residues 101–102, 117–118, 153–154, and D176; these read RD, ER, and SS.

It belongs to the methyltransferase superfamily. RsmJ family.

It localises to the cytoplasm. The enzyme catalyses guanosine(1516) in 16S rRNA + S-adenosyl-L-methionine = N(2)-methylguanosine(1516) in 16S rRNA + S-adenosyl-L-homocysteine + H(+). Its function is as follows. Specifically methylates the guanosine in position 1516 of 16S rRNA. The chain is Ribosomal RNA small subunit methyltransferase J from Vibrio parahaemolyticus serotype O3:K6 (strain RIMD 2210633).